Here is a 45-residue protein sequence, read N- to C-terminus: DNA-directed RNA polymerase subunit Rpo12 (45 aa).

Zn(2+) contacts are provided by cysteine 8, cysteine 23, and cysteine 26.

This sequence belongs to the archaeal Rpo12/eukaryotic RPC10 RNA polymerase subunit family. In terms of assembly, part of the RNA polymerase complex. It depends on Zn(2+) as a cofactor.

It is found in the cytoplasm. The catalysed reaction is RNA(n) + a ribonucleoside 5'-triphosphate = RNA(n+1) + diphosphate. Its function is as follows. DNA-dependent RNA polymerase (RNAP) catalyzes the transcription of DNA into RNA using the four ribonucleoside triphosphates as substrates. This chain is DNA-directed RNA polymerase subunit Rpo12, found in Methanothrix thermoacetophila (strain DSM 6194 / JCM 14653 / NBRC 101360 / PT) (Methanosaeta thermophila).